A 156-amino-acid polypeptide reads, in one-letter code: SsrA-binding protein (156 aa).

Residues 127-156 (GKKKYDKREDLKKKDAKRDVDRAMRDRQKY) are disordered. Residues 132–156 (DKREDLKKKDAKRDVDRAMRDRQKY) are compositionally biased toward basic and acidic residues.

It belongs to the SmpB family.

It localises to the cytoplasm. Functionally, required for rescue of stalled ribosomes mediated by trans-translation. Binds to transfer-messenger RNA (tmRNA), required for stable association of tmRNA with ribosomes. tmRNA and SmpB together mimic tRNA shape, replacing the anticodon stem-loop with SmpB. tmRNA is encoded by the ssrA gene; the 2 termini fold to resemble tRNA(Ala) and it encodes a 'tag peptide', a short internal open reading frame. During trans-translation Ala-aminoacylated tmRNA acts like a tRNA, entering the A-site of stalled ribosomes, displacing the stalled mRNA. The ribosome then switches to translate the ORF on the tmRNA; the nascent peptide is terminated with the 'tag peptide' encoded by the tmRNA and targeted for degradation. The ribosome is freed to recommence translation, which seems to be the essential function of trans-translation. This chain is SsrA-binding protein, found in Exiguobacterium sp. (strain ATCC BAA-1283 / AT1b).